The chain runs to 367 residues: tRNA 2-selenouridine synthase (367 aa).

The Rhodanese domain occupies 12–136; the sequence is FLNDRPLMDA…LRGFLIDTLE (125 aa). C95 functions as the S-selanylcysteine intermediate in the catalytic mechanism.

Belongs to the SelU family. As to quaternary structure, monomer.

The catalysed reaction is 5-methylaminomethyl-2-thiouridine(34) in tRNA + selenophosphate + (2E)-geranyl diphosphate + H2O + H(+) = 5-methylaminomethyl-2-selenouridine(34) in tRNA + (2E)-thiogeraniol + phosphate + diphosphate. The enzyme catalyses 5-methylaminomethyl-2-thiouridine(34) in tRNA + (2E)-geranyl diphosphate = 5-methylaminomethyl-S-(2E)-geranyl-thiouridine(34) in tRNA + diphosphate. It carries out the reaction 5-methylaminomethyl-S-(2E)-geranyl-thiouridine(34) in tRNA + selenophosphate + H(+) = 5-methylaminomethyl-2-(Se-phospho)selenouridine(34) in tRNA + (2E)-thiogeraniol. It catalyses the reaction 5-methylaminomethyl-2-(Se-phospho)selenouridine(34) in tRNA + H2O = 5-methylaminomethyl-2-selenouridine(34) in tRNA + phosphate. In terms of biological role, involved in the post-transcriptional modification of the uridine at the wobble position (U34) of tRNA(Lys), tRNA(Glu) and tRNA(Gln). Catalyzes the conversion of 2-thiouridine (S2U-RNA) to 2-selenouridine (Se2U-RNA). Acts in a two-step process involving geranylation of 2-thiouridine (S2U) to S-geranyl-2-thiouridine (geS2U) and subsequent selenation of the latter derivative to 2-selenouridine (Se2U) in the tRNA chain. The polypeptide is tRNA 2-selenouridine synthase (Pseudomonas fluorescens (strain Pf0-1)).